The primary structure comprises 480 residues: MPKEGITPRAQDYSQWYLDIVQQADLADYAEVVKGCIVFKPTGYALWEAIQRGLDDRIKATGHVNAYFPLLIPKSFLMKEAEHVEGFAPEVAEVTRAGGEDLAEPYVIRPTSETIIGYFYSKWVRSYRDLPLLINQWANVMRWEMRTRPFLRTTEFLWQEGHTVHATEEDAERETLLILHEVYADFVEKDMAIPVIRGLKSEKEKFPGALRSYCIEAMMQDGRALQAGTSHNLGQNFARAFDITYTDQHNTIQYAWTTSWGVSTRLIGALIMTHSDDEGLVIPPRLAPTQVVVVPIYRNDAERSVVMEAVQRMTAEWKGLLRFKVDDRDNLTPGFKFNEWELKGVPIRVEIGPKDIEKGSVAIARRDQPGREGKSFVPQEGLTARLAALLEEIQQALYRRALAFRETHTADVTTYEELKQQVERGFARCYWAGTMEDEKRIQEETRATIRCIPLDQPQQAGRCIYTGKETTQQVIFARAY.

It belongs to the class-II aminoacyl-tRNA synthetase family. ProS type 3 subfamily. In terms of assembly, homodimer.

Its subcellular location is the cytoplasm. The enzyme catalyses tRNA(Pro) + L-proline + ATP = L-prolyl-tRNA(Pro) + AMP + diphosphate. In terms of biological role, catalyzes the attachment of proline to tRNA(Pro) in a two-step reaction: proline is first activated by ATP to form Pro-AMP and then transferred to the acceptor end of tRNA(Pro). This is Proline--tRNA ligase from Roseiflexus castenholzii (strain DSM 13941 / HLO8).